We begin with the raw amino-acid sequence, 169 residues long: Heat shock protein beta-7 (169 aa).

Residues 1–37 form a disordered region; the sequence is MSHRTSSAFRAERSFRSSSSSSSSSSSSASRALPAQD. Positions 1 to 70 are required for localization to SC35 splicing speckles; the sequence is MSHRTSSAFR…PLAFPARPGG (70 aa). Residues 16 to 32 show a composition bias toward low complexity; sequence RSSSSSSSSSSSSASRA. The region spanning 61–169 is the sHSP domain; sequence PLAFPARPGG…QQTFRTEIKI (109 aa).

It belongs to the small heat shock protein (HSP20) family. In terms of assembly, interacts with C-terminal domain of actin-binding protein 280. As to expression, found in both cardiac and slow skeletal (soleus) muscle.

The protein resides in the cytoplasm. It is found in the nucleus. It localises to the cajal body. This Mus musculus (Mouse) protein is Heat shock protein beta-7 (Hspb7).